The primary structure comprises 308 residues: Mycothiol acetyltransferase (308 aa).

Residues 1-20 (MTSDDTAQPSGARRIETRPD) form a disordered region. N-acetyltransferase domains lie at 15-152 (IETR…RSLT) and 165-308 (VTVR…RSET). A 1D-myo-inositol 2-(L-cysteinylamino)-2-deoxy-alpha-D-glucopyranoside-binding site is contributed by Glu47. Acetyl-CoA is bound at residue 91 to 93 (LVV). Glu192, Lys231, and Glu240 together coordinate 1D-myo-inositol 2-(L-cysteinylamino)-2-deoxy-alpha-D-glucopyranoside. Residues 244-246 (VGV) and 251-257 (QGGGLGK) contribute to the acetyl-CoA site. Tyr278 contributes to the 1D-myo-inositol 2-(L-cysteinylamino)-2-deoxy-alpha-D-glucopyranoside binding site.

The protein belongs to the acetyltransferase family. MshD subfamily. In terms of assembly, monomer.

It catalyses the reaction 1D-myo-inositol 2-(L-cysteinylamino)-2-deoxy-alpha-D-glucopyranoside + acetyl-CoA = mycothiol + CoA + H(+). In terms of biological role, catalyzes the transfer of acetyl from acetyl-CoA to desacetylmycothiol (Cys-GlcN-Ins) to form mycothiol. This chain is Mycothiol acetyltransferase, found in Streptomyces scabiei (strain 87.22).